Here is a 452-residue protein sequence, read N- to C-terminus: Glutamyl-tRNA(Gln) amidotransferase subunit A (452 aa).

Residues Lys56 and Ser131 each act as charge relay system in the active site. The active-site Acyl-ester intermediate is the Ser155.

Belongs to the amidase family. GatA subfamily. As to quaternary structure, heterotrimer of A, B and C subunits.

The catalysed reaction is L-glutamyl-tRNA(Gln) + L-glutamine + ATP + H2O = L-glutaminyl-tRNA(Gln) + L-glutamate + ADP + phosphate + H(+). Allows the formation of correctly charged Gln-tRNA(Gln) through the transamidation of misacylated Glu-tRNA(Gln) in organisms which lack glutaminyl-tRNA synthetase. The reaction takes place in the presence of glutamine and ATP through an activated gamma-phospho-Glu-tRNA(Gln). The sequence is that of Glutamyl-tRNA(Gln) amidotransferase subunit A from Campylobacter curvus (strain 525.92).